A 154-amino-acid polypeptide reads, in one-letter code: uncharacterized protein (154 aa).

4 helical membrane passes run 39–61, 65–87, 94–113, and 128–150; these read LLIF…FFAR, LPYI…VSLL, VESL…RVFI, and LLIN…SPFT.

The protein resides in the cell membrane. This is an uncharacterized protein from Aquifex aeolicus (strain VF5).